Consider the following 453-residue polypeptide: Allantoinase (453 aa).

Zn(2+)-binding residues include His-59, His-61, Lys-146, His-186, His-242, and Asp-315. Lys-146 carries the post-translational modification N6-carboxylysine.

Belongs to the metallo-dependent hydrolases superfamily. Allantoinase family. In terms of assembly, homotetramer. Zn(2+) is required as a cofactor. Post-translationally, carboxylation allows a single lysine to coordinate two zinc ions.

It carries out the reaction (S)-allantoin + H2O = allantoate + H(+). The protein operates within nitrogen metabolism; (S)-allantoin degradation; allantoate from (S)-allantoin: step 1/1. Its function is as follows. Catalyzes the conversion of allantoin (5-ureidohydantoin) to allantoic acid by hydrolytic cleavage of the five-member hydantoin ring. The polypeptide is Allantoinase (Salmonella agona (strain SL483)).